The primary structure comprises 273 residues: Large ribosomal subunit protein uL2 (273 aa).

A disordered region spans residues 223–273 (VVMNPVDHPMGGGEGRSSGGRHPCTPWGVPTKGHKTRSNKSTDKYIVKRRG). Residues 262–273 (KSTDKYIVKRRG) show a composition bias toward basic and acidic residues.

It belongs to the universal ribosomal protein uL2 family. In terms of assembly, part of the 50S ribosomal subunit. Forms a bridge to the 30S subunit in the 70S ribosome.

One of the primary rRNA binding proteins. Required for association of the 30S and 50S subunits to form the 70S ribosome, for tRNA binding and peptide bond formation. It has been suggested to have peptidyltransferase activity; this is somewhat controversial. Makes several contacts with the 16S rRNA in the 70S ribosome. The polypeptide is Large ribosomal subunit protein uL2 (Syntrophus aciditrophicus (strain SB)).